The chain runs to 1463 residues: Regulating synaptic membrane exocytosis protein 1 (1463 aa).

The disordered stretch occupies residues 1 to 26 (MSSAVGPRGPRPPTVPPPMQELPDLS). Positions 9 to 20 (GPRPPTVPPPMQ) are enriched in pro residues. Residues 22–205 (LPDLSHLTEE…TKSGAWFFGS (184 aa)) enclose the RabBD domain. The FYVE-type zinc finger occupies 133–193 (KDDAPTCGIC…VCNLCRKQQE (61 aa)). 8 residues coordinate Zn(2+): cysteine 139, cysteine 142, cysteine 155, cysteine 158, cysteine 163, cysteine 166, cysteine 185, and cysteine 188. A disordered region spans residues 205 to 393 (SGPQQPSQDG…DVELESESVS (189 aa)). Residues 206–222 (GPQQPSQDGTLSDTATG) are compositionally biased toward polar residues. Residues 227-240 (VPREKKARLQERSR) show a composition bias toward basic and acidic residues. Residues 241–256 (SQTPLSTAAVSSQDTA) are compositionally biased toward polar residues. Residues 327–372 (ADERERKERRETRRLEKGRSQDYPDRLEKREDGRVAEDEKQRKEEE) show a composition bias toward basic and acidic residues. Acidic residues predominate over residues 381-391 (SCEDVELESES). At serine 413 the chain carries Phosphoserine. The PDZ domain occupies 440–526 (RTTMPKESGA…EPQVEIIVSR (87 aa)). Residues 533–567 (RIPESSHPPLESSSSSFESQKMERPSISVISPTSP) form a disordered region. Low complexity predominate over residues 535–551 (PESSHPPLESSSSSFES). Residues serine 563 and serine 566 each carry the phosphoserine modification. The C2 1 domain occupies 577–700 (LPGQLSVKLW…ALLDDEPHWY (124 aa)). Positions 705-856 (HDESSLPLPQ…YSSEPDSELL (152 aa)) are disordered. Serine 716 is subject to Phosphoserine. A compositionally biased stretch (polar residues) spans 770-779 (ATTLTVPEQQ). Position 812 is a phosphoserine (serine 812). The segment covering 827–844 (RHHDASRSLADHRSRHAE) has biased composition (basic and acidic residues). Serine 866 carries the post-translational modification Phosphoserine. Positions 874–1049 (SELQPSLDRA…RQLPQVPVRS (176 aa)) are disordered. A compositionally biased stretch (basic and acidic residues) spans 928–941 (PENDRHSRKSERSS). A compositionally biased stretch (polar residues) spans 1021–1035 (QGSPTQSPPADTSFG). Position 1023 is a phosphoserine (serine 1023). Position 1025 is a phosphothreonine (threonine 1025). A phosphoserine mark is found at serine 1027, serine 1079, serine 1081, serine 1082, serine 1110, serine 1111, and serine 1113. A disordered region spans residues 1104 to 1161 (DNASAKSSDSDVSDVSAISRASSTSRLSSTSFMSEQSERPRGRISSFTPKMQGRRMGT). The span at 1116 to 1137 (SDVSAISRASSTSRLSSTSFMS) shows a compositional bias: low complexity. The residue at position 1187 (serine 1187) is a Phosphoserine. The segment at 1216–1266 (RSRSTSQLSQTESGHKKLKSTIQRSTETGMAAEMRKMVRQPSRESTDGSIN) is disordered. Residues 1248-1261 (EMRKMVRQPSREST) show a composition bias toward basic and acidic residues. The 119-residue stretch at 1309–1427 (AMGDIQIGME…DLSSMVIGWY (119 aa)) folds into the C2 2 domain. Phosphoserine occurs at positions 1448, 1451, 1454, and 1463.

In terms of assembly, binds SNAP25, SYT1 and CACNA1B. Interaction with SYT1 is enhanced by calcium ions. Interaction with SNAP25 is weaker in the presence of calcium ions. Interacts with TSPOAP1 and RIMBP2; interacts with PPFIA3 and PPFIA4. Interacts with ERC1. Interacts with RAB3A, RAB3B and RAB3D that have been activated by GTP-binding. Interacts with RAB3C, RAB10, RAB26 and RAB37. Binds UNC13A. Post-translationally, phosphorylated by BRSK1.

It localises to the cell membrane. Its subcellular location is the synapse. It is found in the presynaptic cell membrane. Functionally, rab effector involved in exocytosis. May act as scaffold protein that regulates neurotransmitter release at the active zone. Essential for maintaining normal probability of neurotransmitter release and for regulating release during short-term synaptic plasticity. Plays a role in dendrite formation by melanocytes. This chain is Regulating synaptic membrane exocytosis protein 1 (Rims1), found in Mus musculus (Mouse).